Reading from the N-terminus, the 234-residue chain is Large ribosomal subunit protein uL1 (234 aa).

Belongs to the universal ribosomal protein uL1 family. As to quaternary structure, part of the 50S ribosomal subunit.

Its function is as follows. Binds directly to 23S rRNA. The L1 stalk is quite mobile in the ribosome, and is involved in E site tRNA release. Functionally, protein L1 is also a translational repressor protein, it controls the translation of the L11 operon by binding to its mRNA. The polypeptide is Large ribosomal subunit protein uL1 (Pseudoalteromonas translucida (strain TAC 125)).